Here is a 284-residue protein sequence, read N- to C-terminus: Type II methyltransferase M1.DpnII (284 aa).

Residues W17, K21, G46, D62, D177, F178, and D194 each contribute to the S-adenosyl-L-methionine site.

The protein belongs to the N(4)/N(6)-methyltransferase family. In terms of assembly, monomer. Homodimer.

The catalysed reaction is a 2'-deoxyadenosine in DNA + S-adenosyl-L-methionine = an N(6)-methyl-2'-deoxyadenosine in DNA + S-adenosyl-L-homocysteine + H(+). In terms of biological role, an alpha subtype methylase that recognizes the double-stranded sequence 5'-GATC-3', methylates A-2 on both strands, and protects the DNA from cleavage by the DpnII endonuclease. The protein is Type II methyltransferase M1.DpnII of Streptococcus pneumoniae.